A 359-amino-acid chain; its full sequence is Mitochondrial glutathione transporter SLC25A39 (359 aa).

Residues 1-14 (MADQDPAGISPLQQ) are Mitochondrial intermembrane-facing. Solcar repeat units follow at residues 9-151 (ISPL…LKAF), 159-243 (SDLY…VKSW), and 253-347 (TSVG…GKSF). Residues 15–35 (MVASGTGAVVTSLFMTPLDVV) form a helical membrane-spanning segment. Residues 36–121 (KVRLQSQRPS…VKIVRHEGTR (86 aa)) lie on the Mitochondrial matrix side of the membrane. 4 residues coordinate [2Fe-2S] cluster: Cys74, Cys78, Cys88, and Cys94. Residues 122-142 (TLWSGLPATLVMTVPATAIYF) form a helical membrane-spanning segment. Residues 143–160 (TAYDQLKAFLCGRALTSD) lie on the Mitochondrial intermembrane side of the membrane. Residues 161–181 (LYAPMVAGALARLGTVTVISP) form a helical membrane-spanning segment. Over 182–214 (LELMRTKLQAQHVSYRELGACVRTAVAQGGWRS) the chain is Mitochondrial matrix. A helical membrane pass occupies residues 215–235 (LWLGWGPTALRDVPFSALYWF). Topologically, residues 236 to 258 (NYELVKSWLNGFRPKDQTSVGMS) are mitochondrial intermembrane. A helical transmembrane segment spans residues 259–279 (FVAGGISGTVAAVLTLPFDVV). At 280 to 317 (KTQRQVALGAMEAVRVNPLHVDSTWLLLRRIRAESGTK) the chain is on the mitochondrial matrix side. Residues 318-338 (GLFAGFLPRIIKAAPSCAIMI) traverse the membrane as a helical segment. The Mitochondrial intermembrane segment spans residues 339-359 (STYEFGKSFFQRLNQDRLLGG).

It belongs to the mitochondrial carrier (TC 2.A.29) family. In terms of processing, cleaved and degraded by AFG3L2; degradation by AFG3L2 is regulated by the ability of SLC25A39 to bind iron-sulfur. In absence of mitochondrial glutathione, SLC25A39 binds iron-sulfur, preventing cleavage and degradation by AFG3L2. The presence of mitochondrial glutathione prevents iron-sulfur-binding to SLC25A39, promoting cleavage and degradation by AFG3L2. In terms of tissue distribution, expressed in many tissues. Abundant in testis and kidney.

The protein localises to the mitochondrion inner membrane. It carries out the reaction glutathione(in) = glutathione(out). With respect to regulation, the activity of SLC25A39 is regulated by levels of mitochondrial glutathione via its ability to bind [2Fe-2S] iron-sulfur cluster. Upon physiological levels of mitochondrial glutathione, glutathione prevents iron-sulfur-binding to SLC25A39 promoting cleavage and degradation by AFG3L2. Upon depletion of mitochondrial glutathione, SLC25A39 binds iron-sulfur, preventing cleavage and degradation by AFG3L2. Functionally, mitochondrial transporter required for glutathione import into mitochondria. Glutathione, which plays key roles in oxidative metabolism, is produced exclusively in the cytosol and is imported in many organelles. Mitochondrial glutathione is required for the activity and stability of proteins containing iron-sulfur clusters, as well as erythropoiesis. This is Mitochondrial glutathione transporter SLC25A39 from Homo sapiens (Human).